The following is a 127-amino-acid chain: Large ribosomal subunit protein bL12 (127 aa).

The protein belongs to the bacterial ribosomal protein bL12 family. As to quaternary structure, homodimer. Part of the ribosomal stalk of the 50S ribosomal subunit. Forms a multimeric L10(L12)X complex, where L10 forms an elongated spine to which 2 to 4 L12 dimers bind in a sequential fashion. Binds GTP-bound translation factors.

Functionally, forms part of the ribosomal stalk which helps the ribosome interact with GTP-bound translation factors. Is thus essential for accurate translation. This Rhizobium etli (strain ATCC 51251 / DSM 11541 / JCM 21823 / NBRC 15573 / CFN 42) protein is Large ribosomal subunit protein bL12.